Consider the following 1164-residue polypeptide: Hamartin (1164 aa).

Residue K30 forms a Glycyl lysine isopeptide (Lys-Gly) (interchain with G-Cter in ubiquitin) linkage. Residues 403–787 (SDDYVHISLP…QIRQLQHDRE (385 aa)) form a mediates interaction with WDR45B region. The interval 439–571 (LNDRGSEEPP…ADESPAGDRE (133 aa)) is disordered. A compositionally biased stretch (basic and acidic residues) spans 474 to 487 (EKDKEEAAISRELS). A phosphoserine mark is found at S487, S505, S511, S521, and S598. Residues 513–530 (PGSQRKTHSAASSSQGAS) show a composition bias toward polar residues. Residues 721 to 997 (RKVIKAAALE…AAEERLDCCN (277 aa)) are a coiled coil. The segment at 1006–1085 (GHNEEASGHN…TTVGSLPSSK (80 aa)) is disordered. The segment covering 1007–1020 (HNEEASGHNGETKT) has biased composition (basic and acidic residues). The segment covering 1073-1085 (SIPTTVGSLPSSK) has biased composition (polar residues). At S1100 the chain carries Phosphoserine. A disordered region spans residues 1131–1164 (IPLNLDGPHPSPPTPDSVGQLHIMDYNETHHEHS). A compositionally biased stretch (basic and acidic residues) spans 1155 to 1164 (DYNETHHEHS).

In terms of assembly, component of the TSC-TBC complex (also named Rhebulator complex), composed of 2 molecules of TSC1, 2 molecules of TSC2 and 1 molecule of TBC1D7. Probably forms a complex composed of chaperones HSP90 and HSP70, co-chaperones STIP1/HOP, CDC37, PPP5C, PTGES3/p23, TSC1 and client protein TSC2. Forms a complex composed of chaperones HSP90 and HSP70, co-chaperones CDC37, PPP5C, TSC1 and client protein TSC2, CDK4, AKT, RAF1 and NR3C1; this complex does not contain co-chaperones STIP1/HOP and PTGES3/p23. Forms a complex containing HSP90AA1, TSC1 and TSC2; TSC1 is required to recruit TCS2 to the complex. Interacts (via C-terminus) with the closed form of HSP90AA1 (via the middle domain and TPR repeat-binding motif). Interacts with DOCK7. Interacts with FBXW5. Interacts with WDR45B. Interacts with RPAP3 and URI1. In terms of processing, phosphorylation at Ser-505 does not affect interaction with TSC2. 'Lys-63'-linked ubiquitinated at Lys-30 by PELI1; the ubiquitination promotes TSC1/TSC2 complex stability. As to expression, highly expressed in skeletal muscle, followed by heart, brain, placenta, pancreas, lung, liver and kidney. Also expressed in embryonic kidney cells.

It localises to the lysosome membrane. The protein resides in the cytoplasm. The protein localises to the cytosol. Its function is as follows. Non-catalytic component of the TSC-TBC complex, a multiprotein complex that acts as a negative regulator of the canonical mTORC1 complex, an evolutionarily conserved central nutrient sensor that stimulates anabolic reactions and macromolecule biosynthesis to promote cellular biomass generation and growth. The TSC-TBC complex acts as a GTPase-activating protein (GAP) for the small GTPase RHEB, a direct activator of the protein kinase activity of mTORC1. In absence of nutrients, the TSC-TBC complex inhibits mTORC1, thereby preventing phosphorylation of ribosomal protein S6 kinase (RPS6KB1 and RPS6KB2) and EIF4EBP1 (4E-BP1) by the mTORC1 signaling. The TSC-TBC complex is inactivated in response to nutrients, relieving inhibition of mTORC1. Within the TSC-TBC complex, TSC1 stabilizes TSC2 and prevents TSC2 self-aggregation. Acts as a tumor suppressor. Involved in microtubule-mediated protein transport via its ability to regulate mTORC1 signaling. Also acts as a co-chaperone for HSP90AA1 facilitating HSP90AA1 chaperoning of protein clients such as kinases, TSC2 and glucocorticoid receptor NR3C1. Increases ATP binding to HSP90AA1 and inhibits HSP90AA1 ATPase activity. Competes with the activating co-chaperone AHSA1 for binding to HSP90AA1, thereby providing a reciprocal regulatory mechanism for chaperoning of client proteins. Recruits TSC2 to HSP90AA1 and stabilizes TSC2 by preventing the interaction between TSC2 and ubiquitin ligase HERC1. The sequence is that of Hamartin from Homo sapiens (Human).